Here is a 448-residue protein sequence, read N- to C-terminus: Nuclear distribution protein PAC1 (448 aa).

Residues 9–41 (QAEELHKSIIAYLAANNFQDSVTAMRTELNLGE) form the LisH domain. Residues 74–95 (SATPTSLSNRKQDPASWLPAGP) form a disordered region. WD repeat units lie at residues 102 to 143 (SHRT…RTVK), 145 to 185 (HTKA…KNIR), 189 to 236 (GHDH…CLKT), 239 to 278 (GHSD…PETK), 283 to 343 (GHEH…IKTL), 345 to 384 (GHDN…KCVK), and 389 to 444 (MHEH…TSLR).

Belongs to the WD repeat LIS1/nudF family. Self-associates. Interacts with NDL1 and dynein.

It localises to the cytoplasm. It is found in the cytoskeleton. The protein localises to the spindle pole. Its function is as follows. Positively regulates the activity of the minus-end directed microtubule motor protein dynein. May enhance dynein-mediated microtubule sliding by targeting dynein to the microtubule plus end. Required for nuclear migration during vegetative growth as well as development. Required for retrograde early endosome (EE) transport from the hyphal tip. Required for localization of dynein to the mitotic spindle poles. Recruits additional proteins to the dynein complex at SPBs. This is Nuclear distribution protein PAC1 from Fusarium vanettenii (strain ATCC MYA-4622 / CBS 123669 / FGSC 9596 / NRRL 45880 / 77-13-4) (Fusarium solani subsp. pisi).